Reading from the N-terminus, the 197-residue chain is Histone chaperone asf1b-B (197 aa).

This sequence belongs to the ASF1 family. In terms of assembly, interacts with histone H3 and histone H4.

The protein localises to the nucleus. Its function is as follows. Histone chaperone that facilitates histone deposition and histone exchange and removal during nucleosome assembly and disassembly. The chain is Histone chaperone asf1b-B (asf1bb) from Danio rerio (Zebrafish).